We begin with the raw amino-acid sequence, 341 residues long: GTPase Obg (341 aa).

Residues Met1–Leu159 enclose the Obg domain. The segment at Thr128–Arg150 is disordered. Positions Arg129–Gly144 are enriched in polar residues. In terms of domain architecture, OBG-type G spans Ala160–Asp334. GTP-binding positions include Gly166–Ser173, Phe191–His195, Asp213–Gly216, Asn283–Asp286, and Ser315–Ile317. Mg(2+)-binding residues include Ser173 and Thr193.

It belongs to the TRAFAC class OBG-HflX-like GTPase superfamily. OBG GTPase family. Monomer. Mg(2+) is required as a cofactor.

The protein localises to the cytoplasm. Functionally, an essential GTPase which binds GTP, GDP and possibly (p)ppGpp with moderate affinity, with high nucleotide exchange rates and a fairly low GTP hydrolysis rate. Plays a role in control of the cell cycle, stress response, ribosome biogenesis and in those bacteria that undergo differentiation, in morphogenesis control. The protein is GTPase Obg of Legionella pneumophila subsp. pneumophila (strain Philadelphia 1 / ATCC 33152 / DSM 7513).